The sequence spans 453 residues: Ribulose bisphosphate carboxylase large chain (453 aa).

The propeptide occupies 1 to 2 (MS). An N-acetylproline modification is found at Pro3. The residue at position 14 (Lys14) is an N6,N6,N6-trimethyllysine. Substrate contacts are provided by Asn123 and Thr173. Catalysis depends on Lys175, which acts as the Proton acceptor. Lys177 contributes to the substrate binding site. Residues Lys201, Asp203, and Glu204 each contribute to the Mg(2+) site. Lys201 is subject to N6-carboxylysine. Catalysis depends on His294, which acts as the Proton acceptor. Residues Arg295, His327, and Ser379 each contribute to the substrate site.

The protein belongs to the RuBisCO large chain family. Type I subfamily. Heterohexadecamer of 8 large chains and 8 small chains; disulfide-linked. The disulfide link is formed within the large subunit homodimers. The cofactor is Mg(2+). Post-translationally, the disulfide bond which can form in the large chain dimeric partners within the hexadecamer appears to be associated with oxidative stress and protein turnover.

The protein resides in the plastid. It localises to the chloroplast. The enzyme catalyses 2 (2R)-3-phosphoglycerate + 2 H(+) = D-ribulose 1,5-bisphosphate + CO2 + H2O. It carries out the reaction D-ribulose 1,5-bisphosphate + O2 = 2-phosphoglycolate + (2R)-3-phosphoglycerate + 2 H(+). Functionally, ruBisCO catalyzes two reactions: the carboxylation of D-ribulose 1,5-bisphosphate, the primary event in carbon dioxide fixation, as well as the oxidative fragmentation of the pentose substrate in the photorespiration process. Both reactions occur simultaneously and in competition at the same active site. This Galium elongatum (Great marsh bedstraw) protein is Ribulose bisphosphate carboxylase large chain.